Here is a 163-residue protein sequence, read N- to C-terminus: 6,7-dimethyl-8-ribityllumazine synthase 1 (163 aa).

Residues Phe27, 58–60 (ALE), and 87–89 (CVV) each bind 5-amino-6-(D-ribitylamino)uracil. 92-93 (ET) contributes to the (2S)-2-hydroxy-3-oxobutyl phosphate binding site. Catalysis depends on His95, which acts as the Proton donor. Asn120 contributes to the 5-amino-6-(D-ribitylamino)uracil binding site. Arg134 provides a ligand contact to (2S)-2-hydroxy-3-oxobutyl phosphate.

Belongs to the DMRL synthase family.

The catalysed reaction is (2S)-2-hydroxy-3-oxobutyl phosphate + 5-amino-6-(D-ribitylamino)uracil = 6,7-dimethyl-8-(1-D-ribityl)lumazine + phosphate + 2 H2O + H(+). The protein operates within cofactor biosynthesis; riboflavin biosynthesis; riboflavin from 2-hydroxy-3-oxobutyl phosphate and 5-amino-6-(D-ribitylamino)uracil: step 1/2. In terms of biological role, catalyzes the formation of 6,7-dimethyl-8-ribityllumazine by condensation of 5-amino-6-(D-ribitylamino)uracil with 3,4-dihydroxy-2-butanone 4-phosphate. This is the penultimate step in the biosynthesis of riboflavin. The chain is 6,7-dimethyl-8-ribityllumazine synthase 1 from Rhodopseudomonas palustris (strain ATCC BAA-98 / CGA009).